The sequence spans 76 residues: Dermaseptin-B4 (76 aa).

A signal peptide spans 1–22 (MAFLKKSLFLVLFLGLVSLSIC). The propeptide occupies 23-43 (EEEKRENKDEIEQEDDEQSEE). Gln73 bears the Glutamine amide mark. Residues 75 to 76 (EQ) constitute a propeptide that is removed on maturation.

It belongs to the frog skin active peptide (FSAP) family. Dermaseptin subfamily. In terms of tissue distribution, expressed by the skin glands.

It localises to the secreted. Its function is as follows. Potent antimicrobial peptide with potent activity against Gram-positive and Gram-negative bacteria. Probably acts by disturbing membrane functions with its amphipathic structure. Has an activity of stimulation of insulin release, which may protect the species from being eaten by predators by causing fatal hypoglycemia. Has hemolytic activity. This is Dermaseptin-B4 from Phyllomedusa bicolor (Two-colored leaf frog).